The following is a 173-amino-acid chain: MVEKRNIFLIGPMGAGKSTIGRQISQQLSMEFFDSDQEIEKRTGADISWVLDLEGENKFRIREEKIINEITEKQGIVLATGGGSIQSRKTRNRLSARGLVVYLETTIDKQLDRTKRDKKKPILQNKNSVKSFLEKLATERNPLYEDIADLIIKTDFKSAKIIAHQIINTLFKT.

14-19 provides a ligand contact to ATP; sequence GAGKST. A Mg(2+)-binding site is contributed by S18. The substrate site is built by D36, R60, and G82. K120 contacts ATP. Residue R140 coordinates substrate.

Belongs to the shikimate kinase family. In terms of assembly, monomer. The cofactor is Mg(2+).

Its subcellular location is the cytoplasm. It catalyses the reaction shikimate + ATP = 3-phosphoshikimate + ADP + H(+). The protein operates within metabolic intermediate biosynthesis; chorismate biosynthesis; chorismate from D-erythrose 4-phosphate and phosphoenolpyruvate: step 5/7. Catalyzes the specific phosphorylation of the 3-hydroxyl group of shikimic acid using ATP as a cosubstrate. This Wigglesworthia glossinidia brevipalpis protein is Shikimate kinase (aroK).